The chain runs to 408 residues: CinA-like protein (408 aa).

It belongs to the CinA family.

This is CinA-like protein from Anaeromyxobacter dehalogenans (strain 2CP-C).